A 240-amino-acid polypeptide reads, in one-letter code: Protein YIPF6 (240 aa).

The Cytoplasmic portion of the chain corresponds to 1–91; the sequence is MVVSHLNRTV…PKKSSALLRD (91 aa). The chain crosses the membrane as a helical span at residues 92–112; sequence WDLWGPLLLCVTLALMLQGGS. The Lumenal portion of the chain corresponds to 113-125; sequence ADSEEDGRPQFAE. A helical transmembrane segment spans residues 126 to 146; the sequence is VFVIIWFGSVIITLNSKLLGG. At 147–149 the chain is on the cytoplasmic side; that stretch reads TIS. A helical transmembrane segment spans residues 150-170; that stretch reads FFQSLCVLGYCILPLTVAMIV. The Lumenal portion of the chain corresponds to 171-172; sequence CR. The chain crosses the membrane as a helical span at residues 173-193; it reads IVLLGGSGVVSFAVRLIVVTA. Residues 194–215 lie on the Cytoplasmic side of the membrane; that stretch reads SFSWSTFASTAFLADSQPTNRK. A helical transmembrane segment spans residues 216–236; that stretch reads ALVVYPVFLFYFVIGWMILTF. Over 237–240 the chain is Lumenal; the sequence is SPSH.

Belongs to the YIP1 family.

It is found in the golgi apparatus membrane. This Danio rerio (Zebrafish) protein is Protein YIPF6 (yipf6).